We begin with the raw amino-acid sequence, 1633 residues long: Laminin-like protein lam-2 (1633 aa).

A signal peptide spans Met1–Pro19. A Laminin N-terminal domain is found at Gln47–Arg286. Residues Asn116 and Asn136 are each glycosylated (N-linked (GlcNAc...) asparagine). Disulfide bonds link Cys287-Cys296, Cys289-Cys310, Cys312-Cys321, Cys324-Cys344, Cys347-Cys356, Cys349-Cys372, Cys375-Cys384, Cys387-Cys400, Cys403-Cys415, Cys405-Cys421, Cys423-Cys432, Cys435-Cys447, Cys450-Cys464, Cys452-Cys471, Cys473-Cys482, and Cys485-Cys500. 4 consecutive Laminin EGF-like domains span residues Cys287 to Ala346, Cys347 to Ala402, Cys403 to Asn449, and Cys450 to Pro502. Asn348 carries N-linked (GlcNAc...) asparagine glycosylation. In terms of domain architecture, Laminin EGF-like 5; first part spans Cys503–Cys512. 3 N-linked (GlcNAc...) asparagine glycosylation sites follow: Asn522, Asn658, and Asn740. One can recognise a Laminin IV type A domain in the interval Gln529–His701. A Laminin EGF-like 5; second part domain is found at Cys702–Ala747. 23 cysteine pairs are disulfide-bonded: Cys736/Cys745, Cys738/Cys752, Cys754/Cys763, Cys766/Cys782, Cys785/Cys803, Cys806/Cys815, Cys818/Cys832, Cys835/Cys849, Cys837/Cys856, Cys859/Cys868, Cys871/Cys887, Cys890/Cys909, Cys892/Cys916, Cys918/Cys927, Cys930/Cys943, Cys946/Cys958, Cys948/Cys965, Cys967/Cys976, Cys979/Cys991, Cys994/Cys1006, Cys996/Cys1013, Cys1015/Cys1024, and Cys1027/Cys1038. The Laminin EGF-like 6; truncated domain maps to Cys752 to Lys784. 5 consecutive Laminin EGF-like domains span residues Cys785–Glu834, Cys835–Ser889, Cys890–Glu945, Cys946–Pro993, and Cys994–Pro1040. N-linked (GlcNAc...) asparagine glycosylation is present at Asn936. N-linked (GlcNAc...) asparagine glycans are attached at residues Asn1077, Asn1183, Asn1226, Asn1259, Asn1336, Asn1452, and Asn1528.

During the formation of neuromuscular junctions at the larval stage, negatively regulates membrane protrusion from body wall muscles, probably downstream of the integrin complex formed by pat-2 and pat-3. The polypeptide is Laminin-like protein lam-2 (lam-2) (Caenorhabditis elegans).